Here is a 225-residue protein sequence, read N- to C-terminus: Protein GrpE (225 aa).

Disordered stretches follow at residues 1 to 44 and 183 to 225; these read MTEE…ENAG and VAVA…PDEG.

This sequence belongs to the GrpE family. As to quaternary structure, homodimer.

It localises to the cytoplasm. Participates actively in the response to hyperosmotic and heat shock by preventing the aggregation of stress-denatured proteins, in association with DnaK and GrpE. It is the nucleotide exchange factor for DnaK and may function as a thermosensor. Unfolded proteins bind initially to DnaJ; upon interaction with the DnaJ-bound protein, DnaK hydrolyzes its bound ATP, resulting in the formation of a stable complex. GrpE releases ADP from DnaK; ATP binding to DnaK triggers the release of the substrate protein, thus completing the reaction cycle. Several rounds of ATP-dependent interactions between DnaJ, DnaK and GrpE are required for fully efficient folding. This Streptomyces coelicolor (strain ATCC BAA-471 / A3(2) / M145) protein is Protein GrpE.